Consider the following 252-residue polypeptide: MTQPILQVSDLSVYYNKKKALKEVSMDFYPNEITALIGPSGSGKSTLLRAINRMGDLNPEVTLTGAVMYNGHNVYSPRTDTVELRKEIGMVFQQPNPFPMSVFENVVYGLRLKGIKDKATLDEAVETSLKGASIWDEVKDRLHDSALGLSGGQQQRVCIARTLATKPKIILLDEPTSALDPISAGKIEETLHGLKDQYTMLLVTRSMQQASRISDRTGFFLDGNLIEYGNTKEMFMNPKHKETEDYITGKFG.

Residues 6–247 enclose the ABC transporter domain; sequence LQVSDLSVYY…PKHKETEDYI (242 aa). 38 to 45 lines the ATP pocket; it reads GPSGSGKS.

This sequence belongs to the ABC transporter superfamily. Phosphate importer (TC 3.A.1.7) family. The complex is composed of two ATP-binding proteins (PstB), two transmembrane proteins (PstC and PstA) and a solute-binding protein (PstS).

It is found in the cell membrane. The catalysed reaction is phosphate(out) + ATP + H2O = ADP + 2 phosphate(in) + H(+). Part of the ABC transporter complex PstSACB involved in phosphate import. Responsible for energy coupling to the transport system. In Streptococcus agalactiae serotype Ia (strain ATCC 27591 / A909 / CDC SS700), this protein is Phosphate import ATP-binding protein PstB 1.